Here is a 126-residue protein sequence, read N- to C-terminus: Large ribosomal subunit protein uL22 (126 aa).

The protein belongs to the universal ribosomal protein uL22 family. Part of the 50S ribosomal subunit.

This protein binds specifically to 23S rRNA; its binding is stimulated by other ribosomal proteins, e.g. L4, L17, and L20. It is important during the early stages of 50S assembly. It makes multiple contacts with different domains of the 23S rRNA in the assembled 50S subunit and ribosome. In terms of biological role, the globular domain of the protein is located near the polypeptide exit tunnel on the outside of the subunit, while an extended beta-hairpin is found that lines the wall of the exit tunnel in the center of the 70S ribosome. The sequence is that of Large ribosomal subunit protein uL22 from Ruegeria sp. (strain TM1040) (Silicibacter sp.).